The sequence spans 542 residues: MAAKEVKFTSDARDRMLRGVDIMANAVRVTLGPKGRNVVIDKSFGAPRITKDGVSVAKEIELEDKFENMGAQMLREVASRTSDIAGDGTTTATVLAQAIVREGAKAVASGMNPMDLKRGIDLAVEAIVKELRNNARKVSKNAEIAQVATISANGDAEIGRYLAEAMEKVGNEGVITVEEAKTAEIELEVVEGMEFDRGYLSPYFITNQEKMRVELEDAYILLHEKKLSNLQAMIPILESVIQSGKPLLIIAEDVEGEALATLVVNKLRGGLKIAAVKAPGFGDRRKSMLEDIAILTGGTVISEELGIKLENTTMDTLGRAKRIMVDKETTTIVDGAGSKEDIGGRVAQIKAQIEDTTSDYDREKLQERLAKLAGGVAVIRVGGSTEVEVKEKKDRVDDALHATRAAVEEGILPGGGVALLRVVSALNGLATANDDQRVGIEIVRRAIEAPVRQIAENAGAEGSIIVGKLREKQDFAFGWNAQTGEFGDLFQMGVIDPAKVVRAALQDAASIAGLLVTTEAMIAEKPKKDGQPQMPPGGGMDF.

Residues threonine 30–proline 33, lysine 51, aspartate 87–threonine 91, glycine 415, and aspartate 496 contribute to the ATP site.

Belongs to the chaperonin (HSP60) family. As to quaternary structure, forms a cylinder of 14 subunits composed of two heptameric rings stacked back-to-back. Interacts with the co-chaperonin GroES.

The protein resides in the cytoplasm. The catalysed reaction is ATP + H2O + a folded polypeptide = ADP + phosphate + an unfolded polypeptide.. Its function is as follows. Together with its co-chaperonin GroES, plays an essential role in assisting protein folding. The GroEL-GroES system forms a nano-cage that allows encapsulation of the non-native substrate proteins and provides a physical environment optimized to promote and accelerate protein folding. This chain is Chaperonin GroEL 2, found in Rhizobium meliloti (strain 1021) (Ensifer meliloti).